We begin with the raw amino-acid sequence, 317 residues long: Protein-methionine-sulfoxide reductase catalytic subunit MsrP (317 aa).

The segment at residues 1-40 (MNKFTKTDVTPEKLFIQRRKIIQGMSVLSAAAAFPNLAAA) is a signal peptide (tat-type signal). Mo-molybdopterin contacts are provided by residues N72, 75–76 (YE), C129, T164, N216, R221, and 232–234 (SIK).

Belongs to the MsrP family. Heterodimer of a catalytic subunit (MsrP) and a heme-binding subunit (MsrQ). Requires Mo-molybdopterin as cofactor. In terms of processing, predicted to be exported by the Tat system. The position of the signal peptide cleavage has not been experimentally proven.

The protein resides in the periplasm. The enzyme catalyses L-methionyl-[protein] + a quinone + H2O = L-methionyl-(S)-S-oxide-[protein] + a quinol. It carries out the reaction L-methionyl-[protein] + a quinone + H2O = L-methionyl-(R)-S-oxide-[protein] + a quinol. In terms of biological role, part of the MsrPQ system that repairs oxidized periplasmic proteins containing methionine sulfoxide residues (Met-O), using respiratory chain electrons. Thus protects these proteins from oxidative-stress damage caused by reactive species of oxygen and chlorine generated by the host defense mechanisms. MsrPQ is essential for the maintenance of envelope integrity under bleach stress, rescuing a wide series of structurally unrelated periplasmic proteins from methionine oxidation. The catalytic subunit MsrP is non-stereospecific, being able to reduce both (R-) and (S-) diastereoisomers of methionine sulfoxide. The polypeptide is Protein-methionine-sulfoxide reductase catalytic subunit MsrP (Actinobacillus succinogenes (strain ATCC 55618 / DSM 22257 / CCUG 43843 / 130Z)).